Consider the following 1759-residue polypeptide: Histone-lysine N-methyltransferase ASHH2 (1759 aa).

Composition is skewed to basic and acidic residues over residues Q154–E165, E197–E206, and R215–R224. Disordered stretches follow at residues Q154–T181, E197–D237, C437–I482, S515–I556, and D738–I816. Over residues S462–K472 the composition is skewed to basic residues. The segment covering R530–I556 has biased composition (polar residues). Basic residues predominate over residues K758–S775. 2 stretches are compositionally biased toward basic and acidic residues: residues K776 to K797 and G804 to I816. The CW-type zinc-finger motif lies at Y859–N912. Residues C868, C871, C893, and C904 each coordinate Zn(2+). Residues D974–K1024 enclose the AWS domain. An SET domain is found at V1026–N1143. Position 1142 (Y1142) interacts with S-adenosyl-L-methionine. The Post-SET domain maps to A1151–G1167. 4 disordered regions span residues G1225–L1253, A1271–N1345, E1496–P1606, and K1727–S1759. Polar residues predominate over residues D1232–S1241. The span at S1284–S1293 shows a compositional bias: low complexity. Over residues K1304–I1316 the composition is skewed to basic and acidic residues. A compositionally biased stretch (basic residues) spans L1317–T1326. Over residues A1511 to S1521 the composition is skewed to basic and acidic residues. Residues S1530–P1556 show a composition bias toward polar residues. A compositionally biased stretch (basic and acidic residues) spans R1566–R1577. The span at I1581–D1594 shows a compositional bias: polar residues.

It belongs to the class V-like SAM-binding methyltransferase superfamily. Histone-lysine methyltransferase family. SET2 subfamily. As to quaternary structure, interacts with FRI and SUF4, two components of the transcription activator complex FRI-C, and with SWC6, a component of the SWR1 chromatin-remodeling complex. Interacts with BZR2/BES1 and IWS1. In terms of tissue distribution, ubiquitous, with higher levels in young tissues, including shoot and root apex. Expressed in ovules, tapetum layer and microspores.

It localises to the nucleus. The protein localises to the chromosome. The protein resides in the centromere. It catalyses the reaction N(6)-methyl-L-lysyl(36)-[histone H3] + S-adenosyl-L-methionine = N(6),N(6)-dimethyl-L-lysyl(36)-[histone H3] + S-adenosyl-L-homocysteine + H(+). It carries out the reaction N(6),N(6)-dimethyl-L-lysyl(36)-[histone H3] + S-adenosyl-L-methionine = N(6),N(6),N(6)-trimethyl-L-lysyl(36)-[histone H3] + S-adenosyl-L-homocysteine + H(+). Functionally, histone methyltransferase involved in di and tri-methylation of 'Lys-36' of histone H3 (H3K36me2 and H3K36me3). Binds to H3 already mono- or di-methylated on 'Lys-4'(H3K4me1 or H3K4me2), but not to H3K4me3. H3K4me and H3K36me represent specific tags for epigenetic transcriptional activation. Positively regulates FLC transcription to prevent early flowering transition. Required for flowering transition in response to vernalization and for the maintenance of FLC expression in late embryos, but dispensable for the initial reactivation in early embryos during reprogramming. Also seems to modulate several traits including floral organ size, root size and dormancy. Promotes apical dominance. Directly involved in the tri-methylation of 'Lys-36' of histone H3 (H3K36me3) at LAZ5 chromatin to maintain a transcriptionally active state of LAZ5, a TIR-NB-LRR protein involved in innate immunity. Required for brassinosteroid (BR)-induced gene expression and histone H3 trimethylation on 'Lys-36' (H3K36me3) in BR-regulated genes. This Arabidopsis thaliana (Mouse-ear cress) protein is Histone-lysine N-methyltransferase ASHH2.